Reading from the N-terminus, the 233-residue chain is Nickel import system ATP-binding protein NikE (233 aa).

An ABC transporter domain is found at 2-228 (IELKHVTFGY…DRHPYTKELV (227 aa)). 35–42 (GESGCGKS) contacts ATP.

This sequence belongs to the ABC transporter superfamily. As to quaternary structure, the complex is composed of two ATP-binding proteins (NikD and NikE), two transmembrane proteins (NikB and NikC) and a solute-binding protein (NikA).

It is found in the cell membrane. It catalyses the reaction Ni(2+)(out) + ATP + H2O = Ni(2+)(in) + ADP + phosphate + H(+). Part of the ABC transporter complex NikABCDE (Opp2) involved in nickel import. Probably responsible for energy coupling to the transport system. This is Nickel import system ATP-binding protein NikE from Staphylococcus aureus (strain MSSA476).